Here is a 263-residue protein sequence, read N- to C-terminus: 3'-5' ssDNA/RNA exonuclease TatD (263 aa).

A divalent metal cation-binding residues include Glu91, His127, and His152.

The protein belongs to the metallo-dependent hydrolases superfamily. TatD-type hydrolase family. TatD subfamily. As to quaternary structure, monomer. The cofactor is Mg(2+).

It is found in the cytoplasm. Its function is as follows. 3'-5' exonuclease that prefers single-stranded DNA and RNA. May play a role in the H(2)O(2)-induced DNA damage repair. The chain is 3'-5' ssDNA/RNA exonuclease TatD from Klebsiella pneumoniae (strain 342).